Here is a 789-residue protein sequence, read N- to C-terminus: E3 UFM1-protein ligase 1 (789 aa).

The segment at 2 to 212 (AADWEEIRRL…VSNLITRYGF (211 aa)) is required for E3 UFM1-protein ligase activity. 2 disordered regions span residues 407 to 470 (LENS…TGRN) and 743 to 763 (SKKA…ADTI). Residues 444 to 453 (KIKKTKKKGR) are compositionally biased toward basic residues. Acidic residues predominate over residues 748-760 (QEDDNKTEEEEGA).

It belongs to the UFL1 family. Catalytic component of the UFM1 ribosome E3 ligase (UREL) complex. Interacts with E2-like enzyme UFC1.

The protein localises to the endoplasmic reticulum membrane. It localises to the cytoplasm. The protein resides in the cytosol. It is found in the nucleus. Its subcellular location is the chromosome. Functionally, E3 protein ligase that mediates ufmylation, the covalent attachment of the ubiquitin-like modifier UFM1 to lysine residues on target proteins, and which plays a key role in various processes, such as ribosome recycling, response to DNA damage, interferon response or reticulophagy (also called ER-phagy). As part of the UREL complex, plays a key role in ribosome recycling by catalyzing mono-ufmylation of RPL26/uL24 subunit of the 60S ribosome. Ufmylation of RPL26/uL24 occurs on free 60S ribosomes following ribosome dissociation: it weakens the junction between post-termination 60S subunits and SEC61 translocons, promoting release and recycling of the large ribosomal subunit from the endoplasmic reticulum membrane. Ufmylation of RPL26/uL24 and subsequent 60S ribosome recycling either take place after normal termination of translation or after ribosome stalling during cotranslational translocation at the endoplasmic reticulum. Involved in reticulophagy in response to endoplasmic reticulum stress by mediating ufmylation of proteins such as CYB5R3 and RPN1, thereby promoting lysosomal degradation of ufmylated proteins. Ufmylation in response to endoplasmic reticulum stress is essential for processes such as hematopoiesis, blood vessel morphogenesis or inflammatory response. This is E3 UFM1-protein ligase 1 from Gallus gallus (Chicken).